Here is a 542-residue protein sequence, read N- to C-terminus: Endonuclease 4 homolog (542 aa).

Disordered stretches follow at residues 89–123 (NEEI…QTSI) and 141–234 (PFFS…ENKF). Composition is skewed to low complexity over residues 99–115 (SKKL…QQSK) and 147–170 (NNAS…TTTT). Positions 171–206 (TKKRNNKDEENEDDNEEEEEEEEEEEDKKSKKKTTT) form a coiled coil. Residues 179–196 (EENEDDNEEEEEEEEEEE) are compositionally biased toward acidic residues. A compositionally biased stretch (low complexity) spans 205–215 (TTTTTTTTTTA). Positions 216-227 (YKKKSSPKKKKV) are enriched in basic residues. A Nuclear localization signal motif is present at residues 222-227 (PKKKKV). The Zn(2+) site is built by H328, H368, E404, D438, H441, H475, D488, H490, and E520.

It belongs to the AP endonuclease 2 family. It depends on Zn(2+) as a cofactor.

The protein resides in the nucleus. It carries out the reaction Endonucleolytic cleavage to 5'-phosphooligonucleotide end-products.. Functionally, plays a role in DNA repair. It cleaves phosphodiester bonds at apurinic or apyrimidinic sites (AP sites) to produce new 5'-ends that are base-free deoxyribose 5-phosphate residues. The protein is Endonuclease 4 homolog (apnA) of Dictyostelium discoideum (Social amoeba).